The primary structure comprises 129 residues: MWLWQDIQCCPAPPSAPPRALEPGRAPPPPGEGLGAGIPSLSPPQKKPQSVGICVRQKGRQKAGLEKGNRKKELRQANCPSLRPQRKGADTRRLPRETRPTKKRTAAAQPFLQLWNPAPHTSNGRTGDL.

Positions 1-129 are disordered; it reads MWLWQDIQCC…HTSNGRTGDL (129 aa). Basic and acidic residues predominate over residues 87–100; that stretch reads KGADTRRLPRETRP. Polar residues predominate over residues 119–129; sequence PHTSNGRTGDL.

This is an uncharacterized protein from Homo sapiens (Human).